The chain runs to 188 residues: Pyridoxal 5'-phosphate synthase subunit PdxT (188 aa).

46–48 (GES) contributes to the L-glutamine binding site. C78 acts as the Nucleophile in catalysis. L-glutamine-binding positions include R106 and 132–133 (IR). Residues H169 and E171 each act as charge relay system in the active site.

This sequence belongs to the glutaminase PdxT/SNO family. In the presence of PdxS, forms a dodecamer of heterodimers. Only shows activity in the heterodimer.

It carries out the reaction aldehydo-D-ribose 5-phosphate + D-glyceraldehyde 3-phosphate + L-glutamine = pyridoxal 5'-phosphate + L-glutamate + phosphate + 3 H2O + H(+). The catalysed reaction is L-glutamine + H2O = L-glutamate + NH4(+). Its pathway is cofactor biosynthesis; pyridoxal 5'-phosphate biosynthesis. Functionally, catalyzes the hydrolysis of glutamine to glutamate and ammonia as part of the biosynthesis of pyridoxal 5'-phosphate. The resulting ammonia molecule is channeled to the active site of PdxS. This chain is Pyridoxal 5'-phosphate synthase subunit PdxT, found in Tropheryma whipplei (strain TW08/27) (Whipple's bacillus).